Reading from the N-terminus, the 159-residue chain is Ribosomal RNA large subunit methyltransferase H (159 aa).

Residues leucine 76, glycine 108, and phenylalanine 127 to leucine 132 each bind S-adenosyl-L-methionine.

This sequence belongs to the RNA methyltransferase RlmH family. Homodimer.

The protein localises to the cytoplasm. It catalyses the reaction pseudouridine(1915) in 23S rRNA + S-adenosyl-L-methionine = N(3)-methylpseudouridine(1915) in 23S rRNA + S-adenosyl-L-homocysteine + H(+). In terms of biological role, specifically methylates the pseudouridine at position 1915 (m3Psi1915) in 23S rRNA. This is Ribosomal RNA large subunit methyltransferase H from Bacillus cereus (strain ATCC 14579 / DSM 31 / CCUG 7414 / JCM 2152 / NBRC 15305 / NCIMB 9373 / NCTC 2599 / NRRL B-3711).